The primary structure comprises 255 residues: 3-oxoacyl-[acyl-carrier-protein] reductase MabA (255 aa).

NADP(+) contacts are provided by residues 32-35 (NRGI), R55, 69-70 (DV), G98, Y161, K165, I194, and R205. Y161 functions as the Proton acceptor in the catalytic mechanism.

Belongs to the short-chain dehydrogenases/reductases (SDR) family. In terms of assembly, homotetramer.

It is found in the secreted. It localises to the cell wall. The catalysed reaction is a (3R)-hydroxyacyl-[ACP] + NADP(+) = a 3-oxoacyl-[ACP] + NADPH + H(+). It catalyses the reaction a (3R)-3-hydroxyacyl-CoA + NADP(+) = a 3-oxoacyl-CoA + NADPH + H(+). It carries out the reaction (3R)-3-hydroxybutanoyl-CoA + NADP(+) = acetoacetyl-CoA + NADPH + H(+). The enzyme catalyses (3R)-hydroxyoctanoyl-CoA + NADP(+) = 3-oxooctanoyl-CoA + NADPH + H(+). The protein operates within lipid metabolism; mycolic acid biosynthesis. Functionally, part of the mycobacterial fatty acid elongation system FAS-II, which is involved in mycolic acid biosynthesis. Catalyzes the NADPH-dependent reduction of beta-ketoacyl derivatives, the second step of the FAS-II elongation cycle. Has a preference for longer substrates. Can use CoA derivatives as substrates in vitro. The protein is 3-oxoacyl-[acyl-carrier-protein] reductase MabA of Mycolicibacterium smegmatis (strain ATCC 700084 / mc(2)155) (Mycobacterium smegmatis).